A 382-amino-acid chain; its full sequence is Histidinol-phosphate aminotransferase (382 aa).

K215 is modified (N6-(pyridoxal phosphate)lysine). Residues 360 to 382 (NSNNIDNQSKTHSQTSSIRKGTI) are disordered.

This sequence belongs to the class-II pyridoxal-phosphate-dependent aminotransferase family. Histidinol-phosphate aminotransferase subfamily. As to quaternary structure, homodimer. The cofactor is pyridoxal 5'-phosphate.

It carries out the reaction L-histidinol phosphate + 2-oxoglutarate = 3-(imidazol-4-yl)-2-oxopropyl phosphate + L-glutamate. It functions in the pathway amino-acid biosynthesis; L-histidine biosynthesis; L-histidine from 5-phospho-alpha-D-ribose 1-diphosphate: step 7/9. The sequence is that of Histidinol-phosphate aminotransferase from Yersinia pseudotuberculosis serotype IB (strain PB1/+).